The primary structure comprises 147 residues: Male-specific protein scotti (147 aa).

The tract at residues 57–76 is disordered; it reads EPPLGVFPAQGGPNGPPRLR. N128 is a glycosylation site (N-linked (GlcNAc...) asparagine).

This sequence belongs to the male-specific scotti family.

In terms of biological role, post-meiotically transcribed gene that has a role in late spermiogenesis; required for actin cone progression during spermatid individualization. This chain is Male-specific protein scotti, found in Drosophila simulans (Fruit fly).